A 109-amino-acid chain; its full sequence is Beta-keratin-related protein (109 aa).

Serine 2 bears the N-acetylserine mark.

It belongs to the avian keratin family.

This Coturnix japonica (Japanese quail) protein is Beta-keratin-related protein (BKJ).